The primary structure comprises 255 residues: BPI fold-containing family A member 1 (255 aa).

The signal sequence occupies residues 1–19 (MFHIGSLVVLCGLLAPTTA). The tract at residues 87-92 (LLGSLL) is important for surfactant activity and antibacterial properties. N-linked (GlcNAc...) asparagine glycans are attached at residues asparagine 157, asparagine 178, and asparagine 205. Cysteines 179 and 223 form a disulfide.

It belongs to the BPI/LBP/Plunc superfamily. Plunc family. In terms of assembly, monomer. Interacts (via N-terminus) with SCNN1B, a subunit of the heterotrimeric epithelial sodium channel (ENaC); this inhibits proteolytic activation of ENaC. As to expression, expressed in trachea, and at lower levels in nasal epithelium.

The protein resides in the secreted. In terms of biological role, lipid-binding protein which shows high specificity for the surfactant phospholipid dipalmitoylphosphatidylcholine (DPPC). Plays a role in the innate immune responses of the upper airways. Reduces the surface tension in secretions from airway epithelia and inhibits the formation of biofilm by pathogenic Gram-negative bacteria, such as P.aeruginosa and K.pneumoniae. Negatively regulates proteolytic cleavage of SCNN1G, an event that is required for activation of the epithelial sodium channel (ENaC), and thereby contributes to airway surface liquid homeostasis and proper clearance of mucus. Plays a role in the airway inflammatory response after exposure to irritants. May attract macrophages and neutrophils. This Bos taurus (Bovine) protein is BPI fold-containing family A member 1 (BPIFA1).